The primary structure comprises 331 residues: Holliday junction branch migration complex subunit RuvB (331 aa).

The tract at residues 4–182 is large ATPase domain (RuvB-L); sequence KDILQSSECI…FGIPMHLEFY (179 aa). Residues arginine 22, glycine 63, lysine 66, threonine 67, threonine 68, 129–131, arginine 172, tyrosine 182, and arginine 219 each bind ATP; that span reads EDF. Mg(2+) is bound at residue threonine 67. A small ATPAse domain (RuvB-S) region spans residues 183–253; that stretch reads STEELTKVIK…FADQALLRLG (71 aa). The head domain (RuvB-H) stretch occupies residues 256 to 331; it reads KLGLDRQDIK…SYLNEQTYNM (76 aa). DNA is bound by residues arginine 309 and arginine 314.

Belongs to the RuvB family. In terms of assembly, homohexamer. Forms an RuvA(8)-RuvB(12)-Holliday junction (HJ) complex. HJ DNA is sandwiched between 2 RuvA tetramers; dsDNA enters through RuvA and exits via RuvB. An RuvB hexamer assembles on each DNA strand where it exits the tetramer. Each RuvB hexamer is contacted by two RuvA subunits (via domain III) on 2 adjacent RuvB subunits; this complex drives branch migration. In the full resolvosome a probable DNA-RuvA(4)-RuvB(12)-RuvC(2) complex forms which resolves the HJ.

Its subcellular location is the cytoplasm. The catalysed reaction is ATP + H2O = ADP + phosphate + H(+). In terms of biological role, the RuvA-RuvB-RuvC complex processes Holliday junction (HJ) DNA during genetic recombination and DNA repair, while the RuvA-RuvB complex plays an important role in the rescue of blocked DNA replication forks via replication fork reversal (RFR). RuvA specifically binds to HJ cruciform DNA, conferring on it an open structure. The RuvB hexamer acts as an ATP-dependent pump, pulling dsDNA into and through the RuvAB complex. RuvB forms 2 homohexamers on either side of HJ DNA bound by 1 or 2 RuvA tetramers; 4 subunits per hexamer contact DNA at a time. Coordinated motions by a converter formed by DNA-disengaged RuvB subunits stimulates ATP hydrolysis and nucleotide exchange. Immobilization of the converter enables RuvB to convert the ATP-contained energy into a lever motion, pulling 2 nucleotides of DNA out of the RuvA tetramer per ATP hydrolyzed, thus driving DNA branch migration. The RuvB motors rotate together with the DNA substrate, which together with the progressing nucleotide cycle form the mechanistic basis for DNA recombination by continuous HJ branch migration. Branch migration allows RuvC to scan DNA until it finds its consensus sequence, where it cleaves and resolves cruciform DNA. The chain is Holliday junction branch migration complex subunit RuvB from Ehrlichia ruminantium (strain Gardel).